The chain runs to 458 residues: tRNA-2-methylthio-N(6)-dimethylallyladenosine synthase (458 aa).

An MTTase N-terminal domain is found at 3–120 (QKLYIETFGC…LPSMLEQVRC (118 aa)). Residues C12, C49, C83, C157, C161, and C164 each contribute to the [4Fe-4S] cluster site. The Radical SAM core domain maps to 143 to 375 (RADGPKAFVS…QAKIADNAAK (233 aa)). Residues 378–441 (ASMVGSIQSV…PNSLRGRLIG (64 aa)) form the TRAM domain.

It belongs to the methylthiotransferase family. MiaB subfamily. In terms of assembly, monomer. It depends on [4Fe-4S] cluster as a cofactor.

It localises to the cytoplasm. It carries out the reaction N(6)-dimethylallyladenosine(37) in tRNA + (sulfur carrier)-SH + AH2 + 2 S-adenosyl-L-methionine = 2-methylsulfanyl-N(6)-dimethylallyladenosine(37) in tRNA + (sulfur carrier)-H + 5'-deoxyadenosine + L-methionine + A + S-adenosyl-L-homocysteine + 2 H(+). Its function is as follows. Catalyzes the methylthiolation of N6-(dimethylallyl)adenosine (i(6)A), leading to the formation of 2-methylthio-N6-(dimethylallyl)adenosine (ms(2)i(6)A) at position 37 in tRNAs that read codons beginning with uridine. This chain is tRNA-2-methylthio-N(6)-dimethylallyladenosine synthase, found in Methylococcus capsulatus (strain ATCC 33009 / NCIMB 11132 / Bath).